The sequence spans 445 residues: 3-phosphoshikimate 1-carboxyvinyltransferase (445 aa).

The 3-phosphoshikimate site is built by K28, S29, and R33. K28 is a phosphoenolpyruvate binding site. 2 residues coordinate phosphoenolpyruvate: G102 and R130. 3-phosphoshikimate is bound by residues S179, S180, Q181, E330, and H357. Q181 lines the phosphoenolpyruvate pocket. The Proton acceptor role is filled by E330. Phosphoenolpyruvate-binding residues include R361, R405, and K430.

This sequence belongs to the EPSP synthase family. Monomer.

Its subcellular location is the cytoplasm. The catalysed reaction is 3-phosphoshikimate + phosphoenolpyruvate = 5-O-(1-carboxyvinyl)-3-phosphoshikimate + phosphate. It participates in metabolic intermediate biosynthesis; chorismate biosynthesis; chorismate from D-erythrose 4-phosphate and phosphoenolpyruvate: step 6/7. Its function is as follows. Catalyzes the transfer of the enolpyruvyl moiety of phosphoenolpyruvate (PEP) to the 5-hydroxyl of shikimate-3-phosphate (S3P) to produce enolpyruvyl shikimate-3-phosphate and inorganic phosphate. The chain is 3-phosphoshikimate 1-carboxyvinyltransferase from Bifidobacterium longum (strain DJO10A).